A 130-amino-acid polypeptide reads, in one-letter code: Small ribosomal subunit protein eS8 (130 aa).

Belongs to the eukaryotic ribosomal protein eS8 family. In terms of assembly, part of the 30S ribosomal subunit.

The protein is Small ribosomal subunit protein eS8 of Thermococcus onnurineus (strain NA1).